Here is a 1442-residue protein sequence, read N- to C-terminus: ABC transporter G family member 35 (1442 aa).

The ABC transporter 1 domain maps to 169–442; it reads LGMIGIRLAK…FESFGFKCPE (274 aa). ATP is bound at residue 202-209; it reads GPPSSGKT. Residues 520 to 733 form the ABC transmembrane type-2 1 domain; it reads ELLKSCWDKE…AFNAITVNEL (214 aa). Transmembrane regions (helical) follow at residues 538-558, 573-593, 619-639, 657-677, 683-703, 714-734, and 769-789; these read FFYV…STLY, IYVG…LAEM, LPTF…WMVV, FLII…IAST, IANT…GFLL, WAYW…NELF, and IGVG…TLAL. Residues 840-1092 enclose the ABC transporter 2 domain; that stretch reads MSFDDVKYFV…KVVEYFESFP (253 aa). ATP is bound at residue 885–892; the sequence is GVSGAGKT. Residues 1165-1379 enclose the ABC transmembrane type-2 2 domain; the sequence is GQFKSCLWKQ…TIYGLITSQY (215 aa). 7 consecutive transmembrane segments (helical) span residues 1186 to 1206, 1218 to 1238, 1272 to 1292, 1299 to 1319, 1329 to 1349, 1357 to 1377, and 1414 to 1434; these read LVRF…FWQI, MVIG…CSTV, LPYV…MVGF, FLWF…YGMM, VASI…GFFI, WWVW…LITS, and PVAG…AFCI.

Belongs to the ABC transporter superfamily. ABCG family. PDR (TC 3.A.1.205) subfamily. In terms of tissue distribution, ubiquitous with higher levels in roots.

The protein resides in the membrane. Its function is as follows. May be a general defense protein. This Arabidopsis thaliana (Mouse-ear cress) protein is ABC transporter G family member 35 (ABCG35).